The chain runs to 196 residues: Gastrula zinc finger protein XlCGF64.1 (196 aa).

7 consecutive C2H2-type zinc fingers follow at residues Tyr-6–His-28, Phe-34–His-56, Tyr-62–His-84, Phe-90–His-112, Tyr-118–His-140, Phe-146–His-168, and Leu-174–His-196.

The protein belongs to the krueppel C2H2-type zinc-finger protein family.

It is found in the nucleus. Its function is as follows. May be involved in transcriptional regulation. In Xenopus laevis (African clawed frog), this protein is Gastrula zinc finger protein XlCGF64.1.